The primary structure comprises 317 residues: Acetyl-coenzyme A carboxylase carboxyl transferase subunit alpha (317 aa).

Positions 37 to 291 (KLQEKVDKLL…GNAIEDALDD (255 aa)) constitute a CoA carboxyltransferase C-terminal domain.

Belongs to the AccA family. In terms of assembly, acetyl-CoA carboxylase is a heterohexamer composed of biotin carboxyl carrier protein (AccB), biotin carboxylase (AccC) and two subunits each of ACCase subunit alpha (AccA) and ACCase subunit beta (AccD).

The protein resides in the cytoplasm. It carries out the reaction N(6)-carboxybiotinyl-L-lysyl-[protein] + acetyl-CoA = N(6)-biotinyl-L-lysyl-[protein] + malonyl-CoA. The protein operates within lipid metabolism; malonyl-CoA biosynthesis; malonyl-CoA from acetyl-CoA: step 1/1. Component of the acetyl coenzyme A carboxylase (ACC) complex. First, biotin carboxylase catalyzes the carboxylation of biotin on its carrier protein (BCCP) and then the CO(2) group is transferred by the carboxyltransferase to acetyl-CoA to form malonyl-CoA. This chain is Acetyl-coenzyme A carboxylase carboxyl transferase subunit alpha, found in Rhodospirillum centenum (strain ATCC 51521 / SW).